Here is a 564-residue protein sequence, read N- to C-terminus: uncharacterized protein (564 aa).

The next 8 membrane-spanning stretches (helical) occupy residues 12 to 32, 97 to 119, 139 to 161, 188 to 208, 213 to 233, 277 to 297, 306 to 326, and 348 to 368; these read TYYL…LFIL, MTAY…YVLL, AFAL…LALW, FVLG…YDAI, WNLM…FVEY, MTVH…ALLF, NVYL…AFWF, and FHFL…YLIW.

The protein localises to the cell membrane. This is an uncharacterized protein from Bacillus subtilis (strain 168).